The sequence spans 594 residues: NADH-ubiquinone oxidoreductase chain 5 (594 aa).

15 helical membrane-spanning segments follow: residues 1–21 (MNLF…PIMM), 43–63 (AFLI…EMII), 87–107 (IVFA…SMWY), 114–134 (INQF…LVTA), 137–157 (LFQL…LIGW), 171–191 (AILY…WFLS), 211–233 (LPLM…HPWL), 241–261 (TPVS…FLLI), 272–292 (LMQT…AMCA), 301–320 (IIAF…IGIN), 325–347 (AFLH…GSII), 366–386 (MPFT…VPFL), 409–429 (LLIT…IIFF), 457–477 (LMAG…PMTT), and 486–506 (LKMT…EITL).

The protein belongs to the complex I subunit 5 family. Core subunit of respiratory chain NADH dehydrogenase (Complex I) which is composed of 45 different subunits.

It localises to the mitochondrion inner membrane. The enzyme catalyses a ubiquinone + NADH + 5 H(+)(in) = a ubiquinol + NAD(+) + 4 H(+)(out). In terms of biological role, core subunit of the mitochondrial membrane respiratory chain NADH dehydrogenase (Complex I) which catalyzes electron transfer from NADH through the respiratory chain, using ubiquinone as an electron acceptor. Essential for the catalytic activity and assembly of complex I. The sequence is that of NADH-ubiquinone oxidoreductase chain 5 (MT-ND5) from Hippopotamus amphibius (Hippopotamus).